Consider the following 531-residue polypeptide: Apolipoprotein N-acyltransferase (531 aa).

The next 7 helical transmembrane spans lie at 8–28, 34–54, 74–94, 105–125, 128–148, 178–198, and 206–226; these read IILL…LLAM, FGIF…IDGV, WSFG…AFLV, LAVV…VLVA, LWSD…VAEW, VLNV…PALI, and VGLA…YYRL. One can recognise a CN hydrolase domain in the interval 243 to 493; the sequence is VQPVIDQAKK…KGVTDAILPG (251 aa). The active-site Proton acceptor is the Glu287. Lys351 is a catalytic residue. Cys405 serves as the catalytic Nucleophile. Residues 501–521 form a helical membrane-spanning segment; it reads SMLRGRIFWFTGVFLLLVAAI.

It belongs to the CN hydrolase family. Apolipoprotein N-acyltransferase subfamily.

Its subcellular location is the cell inner membrane. It catalyses the reaction N-terminal S-1,2-diacyl-sn-glyceryl-L-cysteinyl-[lipoprotein] + a glycerophospholipid = N-acyl-S-1,2-diacyl-sn-glyceryl-L-cysteinyl-[lipoprotein] + a 2-acyl-sn-glycero-3-phospholipid + H(+). The protein operates within protein modification; lipoprotein biosynthesis (N-acyl transfer). In terms of biological role, catalyzes the phospholipid dependent N-acylation of the N-terminal cysteine of apolipoprotein, the last step in lipoprotein maturation. The chain is Apolipoprotein N-acyltransferase from Sinorhizobium fredii (strain NBRC 101917 / NGR234).